The following is a 71-amino-acid chain: Protein translocase subunit SecE (71 aa).

The chain crosses the membrane as a helical span at residues 43 to 63 (VAGAGILAVGAIGFIIYVLLT).

The protein belongs to the SecE/SEC61-gamma family. Component of the Sec protein translocase complex. Heterotrimer consisting of SecY (alpha), SecG (beta) and SecE (gamma) subunits. The heterotrimers can form oligomers, although 1 heterotrimer is thought to be able to translocate proteins. Interacts with the ribosome. May interact with SecDF, and other proteins may be involved.

The protein resides in the cell membrane. Its function is as follows. Essential subunit of the Sec protein translocation channel SecYEG. Clamps together the 2 halves of SecY. May contact the channel plug during translocation. In Methanosarcina acetivorans (strain ATCC 35395 / DSM 2834 / JCM 12185 / C2A), this protein is Protein translocase subunit SecE.